Consider the following 105-residue polypeptide: uncharacterized protein (105 aa).

This is an uncharacterized protein from Rickettsia conorii (strain ATCC VR-613 / Malish 7).